Consider the following 559-residue polypeptide: Protein GRAVITROPIC IN THE LIGHT 1 (559 aa).

The disordered stretch occupies residues 107–127 (AVNRREEYDTEEEENEEEGEI). A compositionally biased stretch (acidic residues) spans 114–127 (YDTEEEENEEEGEI).

Its function is as follows. Required for red (R) and far red (FR) light-induced and phytochrome-mediated deregulation of negative gravitropism leading to randomization of hypocotyl growth orientation. This chain is Protein GRAVITROPIC IN THE LIGHT 1, found in Arabidopsis thaliana (Mouse-ear cress).